Reading from the N-terminus, the 285-residue chain is MAATRLWHRTGRLLEIASAFGPWPGVYSTSPAFAEVLRMPQKQLRKVVYPLRELEQHLVTDSRPGLIEQRLFDPSLEDIGRAESVFAATVRNRIEYLSSAVRLDHAPSLRQPEVCFIGRSNVGKSSLIKALFSMAPDVEVRISKKPGHTKKMNFFKVGKHFTLVDMPGYGYRAPEDFVDMVETYLKERNNLKRTFLLVDSVVGITKLDNIAIEMCEEFALPYVMILTKIDKSSKGYLLKQVLQIQEFVNTQTQGCFPQLFPISAVTYSGVHLLKCFIADITGSLK.

The 174-residue stretch at 110-283 (RQPEVCFIGR…KCFIADITGS (174 aa)) folds into the EngB-type G domain. Residues 118–125 (GRSNVGKS), 147–151 (GHTKK), 165–168 (DMPG), 227–230 (TKID), and 262–264 (ISA) each bind GTP. The Mg(2+) site is built by Ser-125 and Thr-149.

This sequence belongs to the TRAFAC class TrmE-Era-EngA-EngB-Septin-like GTPase superfamily. EngB GTPase family. Mg(2+) is required as a cofactor.

This Rattus norvegicus (Rat) protein is GTP-binding protein 8 (Gtpbp8).